Consider the following 204-residue polypeptide: Leucyl/phenylalanyl-tRNA--protein transferase (204 aa).

This sequence belongs to the L/F-transferase family.

It is found in the cytoplasm. It catalyses the reaction N-terminal L-lysyl-[protein] + L-leucyl-tRNA(Leu) = N-terminal L-leucyl-L-lysyl-[protein] + tRNA(Leu) + H(+). It carries out the reaction N-terminal L-arginyl-[protein] + L-leucyl-tRNA(Leu) = N-terminal L-leucyl-L-arginyl-[protein] + tRNA(Leu) + H(+). The catalysed reaction is L-phenylalanyl-tRNA(Phe) + an N-terminal L-alpha-aminoacyl-[protein] = an N-terminal L-phenylalanyl-L-alpha-aminoacyl-[protein] + tRNA(Phe). Functionally, functions in the N-end rule pathway of protein degradation where it conjugates Leu, Phe and, less efficiently, Met from aminoacyl-tRNAs to the N-termini of proteins containing an N-terminal arginine or lysine. The sequence is that of Leucyl/phenylalanyl-tRNA--protein transferase from Rhizobium meliloti (strain 1021) (Ensifer meliloti).